Reading from the N-terminus, the 255-residue chain is uncharacterized protein (255 aa).

Belongs to the methyltransferase superfamily.

This is an uncharacterized protein from Bacillus subtilis (strain 168).